Reading from the N-terminus, the 547-residue chain is Phenylalanine--tRNA ligase beta subunit (547 aa).

The region spanning Leu269–Pro344 is the B5 domain. Residues Asp322, Asp328, Glu331, and Asp332 each contribute to the Mg(2+) site.

It belongs to the phenylalanyl-tRNA synthetase beta subunit family. Type 2 subfamily. Tetramer of two alpha and two beta subunits. Mg(2+) is required as a cofactor.

It is found in the cytoplasm. The enzyme catalyses tRNA(Phe) + L-phenylalanine + ATP = L-phenylalanyl-tRNA(Phe) + AMP + diphosphate + H(+). In Archaeoglobus fulgidus (strain ATCC 49558 / DSM 4304 / JCM 9628 / NBRC 100126 / VC-16), this protein is Phenylalanine--tRNA ligase beta subunit.